We begin with the raw amino-acid sequence, 307 residues long: Protein TIPIN homolog (307 aa).

Disordered stretches follow at residues 1–50 (MASL…SQDA) and 252–279 (ASMD…LSNE). Residues 262–271 (PLPPSQPPTP) show a composition bias toward pro residues.

It belongs to the CSM3 family.

It is found in the cytoplasm. Its subcellular location is the nucleus. Functionally, required for normal progression of S-phase. Important for cell survival after DNA damage or replication stress. The sequence is that of Protein TIPIN homolog from Drosophila melanogaster (Fruit fly).